Here is a 436-residue protein sequence, read N- to C-terminus: Trigger factor (436 aa).

The PPIase FKBP-type domain maps to 161 to 246; the sequence is DDRVTVDFVG…VNKVEGLSLP (86 aa).

The protein belongs to the FKBP-type PPIase family. Tig subfamily.

The protein localises to the cytoplasm. The catalysed reaction is [protein]-peptidylproline (omega=180) = [protein]-peptidylproline (omega=0). Its function is as follows. Involved in protein export. Acts as a chaperone by maintaining the newly synthesized protein in an open conformation. Functions as a peptidyl-prolyl cis-trans isomerase. In Pseudoalteromonas atlantica (strain T6c / ATCC BAA-1087), this protein is Trigger factor.